Consider the following 332-residue polypeptide: L-lactate dehydrogenase A chain (332 aa).

N-acetylalanine is present on Ala2. Position 5 is an N6-acetyllysine; alternate (Lys5). Lys5 is subject to N6-succinyllysine; alternate. Residue Lys14 is modified to N6-acetyllysine. 29–57 (GAVGMACAISILMKDLADEVALVDVMEDK) provides a ligand contact to NAD(+). Lys57 bears the N6-acetyllysine; alternate mark. Lys57 participates in a covalent cross-link: Glycyl lysine isopeptide (Lys-Gly) (interchain with G-Cter in SUMO2); alternate. Lys81 is subject to N6-acetyllysine. Position 106 (Arg106) interacts with substrate. Lys118 bears the N6-acetyllysine; alternate mark. Lys118 carries the N6-succinyllysine; alternate modification. The residue at position 126 (Lys126) is an N6-acetyllysine. Asn138 is an NAD(+) binding site. Residues Asn138 and Arg169 each coordinate substrate. His193 (proton acceptor) is an active-site residue. N6-acetyllysine is present on residues Lys224 and Lys232. Tyr239 carries the post-translational modification Phosphotyrosine. An N6-acetyllysine modification is found at Lys243. Thr248 serves as a coordination point for substrate. Thr309 carries the post-translational modification Phosphothreonine. Lys318 is modified (N6-acetyllysine; alternate). Lys318 carries the post-translational modification N6-succinyllysine; alternate. Thr322 carries the phosphothreonine modification.

This sequence belongs to the LDH/MDH superfamily. LDH family. Homotetramer. Interacts with PTEN upstream reading frame protein MP31. Post-translationally, ISGylated.

It is found in the cytoplasm. The enzyme catalyses (S)-lactate + NAD(+) = pyruvate + NADH + H(+). Its pathway is fermentation; pyruvate fermentation to lactate; (S)-lactate from pyruvate: step 1/1. Its function is as follows. Interconverts simultaneously and stereospecifically pyruvate and lactate with concomitant interconversion of NADH and NAD(+). This is L-lactate dehydrogenase A chain (LDHA) from Bos taurus (Bovine).